The following is a 109-amino-acid chain: Spermidine export protein MdtI (109 aa).

4 helical membrane-spanning segments follow: residues 6 to 26 (WVHA…NVFL), 36 to 56 (FYGI…SQAV), 64 to 84 (AYAL…WVLF), and 88 to 108 (LNNK…MIKL).

It belongs to the drug/metabolite transporter (DMT) superfamily. Small multidrug resistance (SMR) (TC 2.A.7.1) family. MdtI subfamily. In terms of assembly, forms a complex with MdtJ.

It is found in the cell inner membrane. Functionally, catalyzes the excretion of spermidine. The polypeptide is Spermidine export protein MdtI (Citrobacter koseri (strain ATCC BAA-895 / CDC 4225-83 / SGSC4696)).